Reading from the N-terminus, the 30-residue chain is Brevinin-2Ej (30 aa).

Residues Cys24 and Cys30 are joined by a disulfide bond.

As to expression, expressed by the skin glands.

It is found in the secreted. Its function is as follows. Shows antibacterial activity against representative Gram-negative and Gram-positive bacterial species, and hemolytic activity. The sequence is that of Brevinin-2Ej from Pelophylax ridibundus (Marsh frog).